Reading from the N-terminus, the 114-residue chain is Circadian clock oscillator protein KaiB (114 aa).

It belongs to the KaiB family. As to quaternary structure, may undergo a major conformational rearrangment; in the free state forms homooligomers. When bound to KaiC switches to a monomeric thioredoxin-fold (KaiB(fs)). The active oscillator complex is probably KaiC(6):KaiB(6).

Component of the KaiBC clock protein complex, which constitutes the main circadian regulator in cyanobacteria; it may modify the ATPase activity of KaiC. In terms of biological role, may be a metamorphic protein which reversibly switches between an inactive tetrameric fold and a rare, thioredoxin-like monomeric fold (KaiB(fs)). KaiB(fs) binds phospho-KaiC, and perhaps clock output effectors. The polypeptide is Circadian clock oscillator protein KaiB (Prochlorococcus marinus (strain MIT 9211)).